The sequence spans 599 residues: MAQAWAFLLLPALALASYASHLLLPAYITTPLCGGGDGARSFFLCAQAPKDQDQDPSPASTMYKTAFHFQPAKNWMNDPSGPMYFNGIYHEFYQYNLNGPIFGDIVWGHSVSTDLVNWIGLEPALVRDTPSDIDGCWTGSVTILPGGKPVIIYTGGNIDQHQTQNIAFPKNRSDPYLREWIKAANNPVLRPDEPGMNVIEFRDPTTGWIGPDGHWRMAVGGELNGYSAALLYKSEDFLNWTKVDHPPYSHNGSNMWECPDFFAALPGNNGGLDLSAAIPQGAKHALKMSVDSVDKYMIGVYDLQRDAFVPDNVVDDRRLWLRMDYGTFYASKSFFDSKKGRRIVWGWSGETDSPSDDLAKGWAGLHTIPRTIWLAADGKQLLQWPVEEIESLRTNEINHQGLELNKGDLFEIKEVDAFQADVEIDFELASIDEAEPFDPSWLLDPEKHCGEAGASVPGGIGPFGLVILASDNMDEHTEVYFRVYKSQEKYMVLMCSDLRRSSLRPGLEKPAYGGFFEFDLAKERKISLRTLIDRSAVESFGGGGRVCITSRVYPAVLANVGRAHIYAFNNGNAMVRVPQLSAWTMRKAQVNVEKGWSAI.

Positions 1-16 (MAQAWAFLLLPALALA) are cleaved as a signal peptide. Residue Asp-78 is part of the active site. N-linked (GlcNAc...) asparagine glycosylation is found at Asn-171, Asn-239, and Asn-251. A disulfide bridge connects residues Cys-449 and Cys-495.

This sequence belongs to the glycosyl hydrolase 32 family.

It catalyses the reaction Hydrolysis of terminal, non-reducing (2-&gt;1)-linked beta-D-fructofuranose residues in fructans.. Its activity is regulated as follows. Inhibited by sucrose. Hydrolyzes inulin-type beta-(2,1)-fructans. May play a role as a beta-(2,1)-trimmer during graminan biosynthesis. In Hordeum vulgare (Barley), this protein is Fructan 1-exohydrolase.